A 279-amino-acid polypeptide reads, in one-letter code: Probable endonuclease 4 (279 aa).

Residues H69, H109, E145, D179, H182, H216, D229, H231, and E261 each contribute to the Zn(2+) site.

This sequence belongs to the AP endonuclease 2 family. The cofactor is Zn(2+).

It catalyses the reaction Endonucleolytic cleavage to 5'-phosphooligonucleotide end-products.. In terms of biological role, endonuclease IV plays a role in DNA repair. It cleaves phosphodiester bonds at apurinic or apyrimidinic (AP) sites, generating a 3'-hydroxyl group and a 5'-terminal sugar phosphate. This is Probable endonuclease 4 from Buchnera aphidicola subsp. Schizaphis graminum (strain Sg).